Consider the following 371-residue polypeptide: o-succinylbenzoate synthase (371 aa).

The Proton donor role is filled by K164. The Mg(2+) site is built by D189, E214, and D239. K263 serves as the catalytic Proton acceptor.

It belongs to the mandelate racemase/muconate lactonizing enzyme family. MenC type 2 subfamily. A divalent metal cation serves as cofactor.

The catalysed reaction is (1R,6R)-6-hydroxy-2-succinyl-cyclohexa-2,4-diene-1-carboxylate = 2-succinylbenzoate + H2O. Its pathway is quinol/quinone metabolism; 1,4-dihydroxy-2-naphthoate biosynthesis; 1,4-dihydroxy-2-naphthoate from chorismate: step 4/7. The protein operates within quinol/quinone metabolism; menaquinone biosynthesis. Converts 2-succinyl-6-hydroxy-2,4-cyclohexadiene-1-carboxylate (SHCHC) to 2-succinylbenzoate (OSB). Does not show detectable N-acylamino acid racemase (NAAAR) activity with N-acetyl-S-methionine as substrate. This is o-succinylbenzoate synthase from Bacillus subtilis (strain 168).